The sequence spans 504 residues: CDK5 regulatory subunit-associated protein 3 (504 aa).

3 short sequence motifs (shuffled ATG8-binding motif) span residues 266–269, 290–293, and 308–311; these read IDWG. Residues 268–504 form a required for interaction with UFL1 and mediates interaction with CHEK1 region; that stretch reads WGDFGLEAVS…RPVNLMGTSV (237 aa). Residues 353 to 368 form an RPL10a-binding domain (RBD) region; sequence DELMELEIFLSQRAVE. Lys-448 is covalently cross-linked (Glycyl lysine isopeptide (Lys-Gly) (interchain with G-Cter in SUMO2)).

It belongs to the CDK5RAP3 family. As to quaternary structure, substrate adapter component of the UFM1 ribosome E3 ligase (UREL) complex, composed of UFL1, DDRGK1 and CDK5RAP3. Interaction with UFL1 anchors CDK5RAP3 in the cytoplasm, preventing its translocation to the nucleus which allows expression of the CCND1 cyclin and progression of cells through the G1/S transition. Interacts with ATG8 family proteins MAP1LC3A, MAP1LC3B, GABARAP, GABARAPL1 and GABARAPL2. Interacts with CDK5R1; competes with CDK5RAP1 and CDK5RAP2. Interacts with RELA. Interacts with CHEK1; may negatively regulate CHEK1 and thereby stimulate entry into mitosis. Interacts with CDKN2A/ARF and MDM2; forms a ternary complex involved in regulation of p53/TP53. Interacts with MAPK14. Interacts with CCNB1. Interacts with TUBG1; may regulate CDK5RAP3 in mitotic G2/M transition checkpoint. Post-translationally, may be phosphorylated by CDK5. In terms of processing, ubiquitinated. Probably triggers proteasomal degradation and is negatively regulated by UFL1. May be ufmylated. Post-translationally, cleaved by caspases early during apoptosis, the resulting peptides may play a role in rupture of the nuclear envelope. In terms of tissue distribution, expressed in vascular endothelium. Up-regulated in failing heart. Highly expressed in the ventricular section in subacute and chronic ischemic heart failure.

It is found in the endoplasmic reticulum membrane. Its subcellular location is the cytoplasm. The protein localises to the nucleus. It localises to the cytoskeleton. The protein resides in the microtubule organizing center. It is found in the centrosome. In terms of biological role, substrate adapter of E3 ligase complexes mediating ufmylation, the covalent attachment of the ubiquitin-like modifier UFM1 to substrate proteins, and which is involved in various processes, such as ribosome recycling and reticulophagy (also called ER-phagy). As part of the UREL complex, plays a key role in ribosome recycling by promoting mono-ufmylation of RPL26/uL24 subunit of the 60S ribosome. Ufmylation of RPL26/uL24 occurs on free 60S ribosomes following ribosome dissociation: it weakens the junction between post-termination 60S subunits and SEC61 translocons, promoting release and recycling of the large ribosomal subunit from the endoplasmic reticulum membrane. Ufmylation of RPL26/uL24 and subsequent 60S ribosome recycling either take place after normal termination of translation or after ribosome stalling during cotranslational translocation at the endoplasmic reticulum. Within the UREL complex, CDK5RAP3 acts as a substrate adapter that constrains UFL1 ligase activity to mono-ufmylate RPL26/uL24 at 'Lys-134'. The UREL complex is also involved in reticulophagy in response to endoplasmic reticulum stress by promoting ufmylation of proteins such as CYB5R3, thereby promoting lysosomal degradation of ufmylated proteins. Also acts as a regulator of transcription: negatively regulates NF-kappa-B-mediated gene transcription through the control of RELA phosphorylation. Also regulates mitotic G2/M transition checkpoint and mitotic G2 DNA damage checkpoint. Through its interaction with CDKN2A/ARF and MDM2 may induce MDM2-dependent p53/TP53 ubiquitination, stabilization and activation in the nucleus, thereby promoting G1 cell cycle arrest and inhibition of cell proliferation. May also play a role in the rupture of the nuclear envelope during apoptosis. May regulate MAPK14 activity by regulating its dephosphorylation by PPM1D/WIP1. Required for liver development. The polypeptide is CDK5 regulatory subunit-associated protein 3 (Rattus norvegicus (Rat)).